The chain runs to 333 residues: Large ribosomal subunit protein uL3 (333 aa).

Basic residues-rich tracts occupy residues 1–10 (MGMKRNRPRR) and 17–26 (PRKRAKRPVP). The disordered stretch occupies residues 1-29 (MGMKRNRPRRGSLAFSPRKRAKRPVPKIR).

Belongs to the universal ribosomal protein uL3 family. In terms of assembly, part of the 50S ribosomal subunit. Forms a cluster with proteins L14 and L24e.

Its function is as follows. One of the primary rRNA binding proteins, it binds directly near the 3'-end of the 23S rRNA, where it nucleates assembly of the 50S subunit. The protein is Large ribosomal subunit protein uL3 of Methanococcus aeolicus (strain ATCC BAA-1280 / DSM 17508 / OCM 812 / Nankai-3).